A 244-amino-acid chain; its full sequence is 5-oxoprolinase subunit A (244 aa).

It belongs to the LamB/PxpA family. In terms of assembly, forms a complex composed of PxpA, PxpB and PxpC.

The catalysed reaction is 5-oxo-L-proline + ATP + 2 H2O = L-glutamate + ADP + phosphate + H(+). Catalyzes the cleavage of 5-oxoproline to form L-glutamate coupled to the hydrolysis of ATP to ADP and inorganic phosphate. The chain is 5-oxoprolinase subunit A from Salmonella typhimurium (strain LT2 / SGSC1412 / ATCC 700720).